The sequence spans 1167 residues: DNA-directed RNA polymerase subunit beta (1167 aa).

Belongs to the RNA polymerase beta chain family. The RNAP catalytic core consists of 2 alpha, 1 beta, 1 beta' and 1 omega subunit. When a sigma factor is associated with the core the holoenzyme is formed, which can initiate transcription.

The enzyme catalyses RNA(n) + a ribonucleoside 5'-triphosphate = RNA(n+1) + diphosphate. Its function is as follows. DNA-dependent RNA polymerase catalyzes the transcription of DNA into RNA using the four ribonucleoside triphosphates as substrates. This is DNA-directed RNA polymerase subunit beta from Treponema denticola (strain ATCC 35405 / DSM 14222 / CIP 103919 / JCM 8153 / KCTC 15104).